The primary structure comprises 387 residues: 1-deoxy-D-xylulose 5-phosphate reductoisomerase (387 aa).

Residues Thr11, Gly12, Ser13, Ile14, Gly37, Arg38, Asn39, and Asn125 each contribute to the NADPH site. A 1-deoxy-D-xylulose 5-phosphate-binding site is contributed by Lys126. Glu127 provides a ligand contact to NADPH. A Mn(2+)-binding site is contributed by Asp151. Residues Ser152, Glu153, Ser177, and His200 each coordinate 1-deoxy-D-xylulose 5-phosphate. Residue Glu153 participates in Mn(2+) binding. Gly206 lines the NADPH pocket. Ser213, Asn218, Lys219, and Glu222 together coordinate 1-deoxy-D-xylulose 5-phosphate. Glu222 is a Mn(2+) binding site.

It belongs to the DXR family. The cofactor is Mg(2+). It depends on Mn(2+) as a cofactor.

It catalyses the reaction 2-C-methyl-D-erythritol 4-phosphate + NADP(+) = 1-deoxy-D-xylulose 5-phosphate + NADPH + H(+). It functions in the pathway isoprenoid biosynthesis; isopentenyl diphosphate biosynthesis via DXP pathway; isopentenyl diphosphate from 1-deoxy-D-xylulose 5-phosphate: step 1/6. In terms of biological role, catalyzes the NADPH-dependent rearrangement and reduction of 1-deoxy-D-xylulose-5-phosphate (DXP) to 2-C-methyl-D-erythritol 4-phosphate (MEP). This chain is 1-deoxy-D-xylulose 5-phosphate reductoisomerase, found in Desulforamulus reducens (strain ATCC BAA-1160 / DSM 100696 / MI-1) (Desulfotomaculum reducens).